Reading from the N-terminus, the 419-residue chain is GTPase Obg (419 aa).

In terms of domain architecture, Obg spans Met1 to Met156. The OBG-type G domain occupies Ala157 to Ile334. Residues Gly163–Ser170, Phe188–Val192, Asp209–Gly212, Asn278–Asp281, and Asn315–Ile317 contribute to the GTP site. Mg(2+)-binding residues include Ser170 and Thr190. One can recognise an OCT domain in the interval Ile342–Asn419.

The protein belongs to the TRAFAC class OBG-HflX-like GTPase superfamily. OBG GTPase family. In terms of assembly, monomer. Mg(2+) serves as cofactor.

It is found in the cytoplasm. Functionally, an essential GTPase which binds GTP, GDP and possibly (p)ppGpp with moderate affinity, with high nucleotide exchange rates and a fairly low GTP hydrolysis rate. Plays a role in control of the cell cycle, stress response, ribosome biogenesis and in those bacteria that undergo differentiation, in morphogenesis control. In Mesomycoplasma hyopneumoniae (strain 7448) (Mycoplasma hyopneumoniae), this protein is GTPase Obg.